Here is a 411-residue protein sequence, read N- to C-terminus: MKCDPSIAKLINNELSRQETHLELIASENFASKAVMEAQGSVLTNKYAEGLPNKRYYGGCEYIDGIEQLAIDRAKNLFGANWANVQPHSGAQANFAVFLSLLKPGDTIMGMDLSHGGHLTHGSPVNVSGKWFKTCHYEVDKKTEMLDMDAIRKKAIENQPKLIICGFSAYPRKIDFKAFRSIADEVNAYLLADIAHIAGLVASGLHPSPIPYCDVVTTTTHKTLRGPRGGLILSKDEEIGKKLDKAVFPGTQGGPLEHVIAAKAVAFQEASAPEFKIYSQKVISNAQVLSNQLQKRGISIVSKGTDNHIVLLDLRSIGMTGKVADQLVSDIKITANKNTVPFDPESPFVTSGLRLGSAALTTRGFNEQAFEDVGNIIADRLLNPNDEDIKENSINKVSELCNKFPLYSENI.

(6S)-5,6,7,8-tetrahydrofolate is bound by residues leucine 113 and 117-119; that span reads GHL. Residue lysine 222 is modified to N6-(pyridoxal phosphate)lysine. Residues glutamate 238 and 346-348 each bind (6S)-5,6,7,8-tetrahydrofolate; that span reads SPF.

It belongs to the SHMT family. In terms of assembly, homodimer. Pyridoxal 5'-phosphate serves as cofactor.

The protein localises to the cytoplasm. It catalyses the reaction (6R)-5,10-methylene-5,6,7,8-tetrahydrofolate + glycine + H2O = (6S)-5,6,7,8-tetrahydrofolate + L-serine. It functions in the pathway one-carbon metabolism; tetrahydrofolate interconversion. It participates in amino-acid biosynthesis; glycine biosynthesis; glycine from L-serine: step 1/1. In terms of biological role, catalyzes the reversible interconversion of serine and glycine with tetrahydrofolate (THF) serving as the one-carbon carrier. This reaction serves as the major source of one-carbon groups required for the biosynthesis of purines, thymidylate, methionine, and other important biomolecules. Also exhibits THF-independent aldolase activity toward beta-hydroxyamino acids, producing glycine and aldehydes, via a retro-aldol mechanism. This is Serine hydroxymethyltransferase from Prochlorococcus marinus (strain NATL1A).